The chain runs to 663 residues: Protein pat-12 (663 aa).

Polar residues predominate over residues 1–15; sequence MTSHIATETSVNRWS. Disordered stretches follow at residues 1-78, 367-430, 517-546, and 597-663; these read MTSH…SGDY, RFEE…GQET, FRRG…DYRR, and PMPA…RRRR. Residues 367-380 are compositionally biased toward basic and acidic residues; it reads RFEETRRTEEVERR. Over residues 381–400 the composition is skewed to basic residues; the sequence is VQRREKKERRSRHHSSSRHH. Residues 517-526 show a composition bias toward polar residues; that stretch reads FRRGSQQQVS. Basic and acidic residues-rich tracts occupy residues 620-640 and 649-663; these read FNKE…KPVD and NYKR…RRRR.

As to quaternary structure, interacts with vab-10 (via plankin domain). As to expression, isoform a: Expressed in the uterus, the vulva, the rectum, mechanosensory neurons and in head and tail neurons. Isoform e: Expressed in spermatheca and weakly in the vulva. Isoform f: Expressed in spermatheca and weakly in the vulva. Isoform i: Expressed in spermatheca and weakly in the vulva.

It localises to the apical cell membrane. Its subcellular location is the basal cell membrane. The protein resides in the cytoplasm. It is found in the cell junction. The protein localises to the hemidesmosome. It localises to the cell membrane. Its subcellular location is the cytoskeleton. In terms of biological role, required for embryonic morphology and development. Plays both a functional and a structural role in the maintenance and probably biogenesis of fibrous organelles, a hemidesomosome-like junction structure, which ensures muscle stability and muscle connection to the external cuticle. The chain is Protein pat-12 from Caenorhabditis elegans.